A 119-amino-acid polypeptide reads, in one-letter code: FAD-linked sulfhydryl oxidase (119 aa).

The ERV/ALR sulfhydryl oxidase domain maps to 1–97 (MLHWGPKFWR…ISWSEYKNIY (97 aa)). The cysteines at positions 44 and 47 are disulfide-linked.

Belongs to the asfivirus B119L family. As to quaternary structure, interacts with A151R. Requires FAD as cofactor.

The protein resides in the host cytoplasm. The protein localises to the virion. It carries out the reaction 2 R'C(R)SH + O2 = R'C(R)S-S(R)CR' + H2O2. Its function is as follows. FAD-dependent sulfhydryl oxidase that catalyzes the formation of disulfide bonds in viral proteins produced in the cell cytoplasm. This Ornithodoros (relapsing fever ticks) protein is FAD-linked sulfhydryl oxidase.